The sequence spans 368 residues: 2-oxoglutarate-dependent dioxygenase frbJ (368 aa).

One can recognise a Fe2OG dioxygenase domain in the interval 171 to 277 (QQHKLKIVKY…RYSIPFFQGV (107 aa)). Fe cation contacts are provided by His198, Asp200, and His256. Arg268 provides a ligand contact to 2-oxoglutarate.

It belongs to the iron/ascorbate-dependent oxidoreductase family.

It functions in the pathway antifungal biosynthesis. Its function is as follows. 2-oxoglutarate-dependent dioxygenase; part of the gene cluster that mediates the biosynthesis of the antifungal antibiotic FR901469, an inhibitor of beta-1,3-glucansynthase, exerting antifungal activity against the pathogenes Candida albicans and Aspergillus fumigatus. FR901469 is a cyclic depsipeptide containing 12 amino acid residues and a fatty acid chain. The NRPS frbI contains 12 modules responsible for the formation of the depsipeptide backbone which is denoted as Acyl-Thr-Ala-Tyr-Val-4OHPro-Thr-Thr-3OHPro-threo3OHGln-Gly-Thr-Orn-OH (C71H116N14O23). The PKS frbB is probably involved in the production of the hydrocarbon chain, and the acyl-CoA ligase frbC might be involved in the transport of the chain to the peptide ptoduct of frbI. Because FR901469 contains 3 hydroxylated amino acid residues, the 3 oxygenases frbA, frbH, and frbJ might be participating in amino acid hydroxylation. As no thioesterase domains were detected in frbI or frbB, the thioesterases frbD and frbE may instead release and cyclize the products of the NRPS and PKS, respectively. The polypeptide is 2-oxoglutarate-dependent dioxygenase frbJ (Dothideomycetidae sp. (strain 11243) (Fungal sp. (strain No.11243))).